The chain runs to 334 residues: MATIKDVARLAGVSTTTVSHVINKTRFVAETTQEKVMKAVDELNYAPSAVARSLKCNSTRTIGMLVTQSTNLFFSEVIDGVESYCYRQGYTLILCNTGGIYEKQRDYIRMLAEKRVDGILVMCSDLTEELKEMLDRHSDIPKVVMDWGPESSQADKIIDNSEEGGYIATKYLIDNGHTDIACLSGHFEKAACQERIAGYRRAMAEANLAVNEDWVLEGNFECDTAVLAADNITAMEKRPTAVFCFNDTMALGLMSRLQQNGLKVPDDISVIGYDNIELAEYFSPPLTTIHQPKRRVGKNAFEILLERIKDKEHEKRVFEMQPEIVVRNTVKKLN.

Positions 2–56 (ATIKDVARLAGVSTTTVSHVINKTRFVAETTQEKVMKAVDELNYAPSAVARSLKC) constitute an HTH lacI-type domain. Residues 4–23 (IKDVARLAGVSTTTVSHVIN) constitute a DNA-binding region (H-T-H motif). Residues 48-56 (SAVARSLKC) mediate DNA binding. 4 residues coordinate hypoxanthine: F73, K189, F220, and D274.

Homodimer.

Its pathway is purine metabolism; purine nucleotide biosynthesis [regulation]. In terms of biological role, is the main repressor of the genes involved in the de novo synthesis of purine nucleotides, regulating purB, purC, purEK, purF, purHD, purL, purMN and guaBA expression. PurR is allosterically activated to bind its cognate DNA by binding the purine corepressors, hypoxanthine or guanine, thereby effecting transcription repression. The sequence is that of HTH-type transcriptional repressor PurR from Vibrio campbellii (strain ATCC BAA-1116).